A 643-amino-acid polypeptide reads, in one-letter code: 3D-(3,5/4)-trihydroxycyclohexane-1,2-dione hydrolase (643 aa).

Glu65 lines the thiamine diphosphate pocket. A thiamine pyrophosphate binding region spans residues 441–521 (SLPGDLQRMW…VNVLLFDNCG (81 aa)). Positions 492 and 519 each coordinate Mg(2+).

Belongs to the TPP enzyme family. It depends on Mg(2+) as a cofactor. Requires thiamine diphosphate as cofactor.

The catalysed reaction is 3D-3,5/4-trihydroxycyclohexane-1,2-dione + H2O = 5-deoxy-D-glucuronate + H(+). It functions in the pathway polyol metabolism; myo-inositol degradation into acetyl-CoA; acetyl-CoA from myo-inositol: step 3/7. In terms of biological role, involved in the cleavage of the C1-C2 bond of 3D-(3,5/4)-trihydroxycyclohexane-1,2-dione (THcHDO) to yield 5-deoxy-glucuronate (5DG). The sequence is that of 3D-(3,5/4)-trihydroxycyclohexane-1,2-dione hydrolase from Clostridium botulinum (strain Alaska E43 / Type E3).